The sequence spans 158 residues: uncharacterized protein (158 aa).

An HTH hxlR-type domain is found at 13–110; that stretch reads ESVGRALELV…WGDEYLPRPE (98 aa).

This is an uncharacterized protein from Mycobacterium tuberculosis (strain ATCC 25618 / H37Rv).